The chain runs to 630 residues: DNA mismatch repair protein MutL (630 aa).

Belongs to the DNA mismatch repair MutL/HexB family.

Functionally, this protein is involved in the repair of mismatches in DNA. It is required for dam-dependent methyl-directed DNA mismatch repair. May act as a 'molecular matchmaker', a protein that promotes the formation of a stable complex between two or more DNA-binding proteins in an ATP-dependent manner without itself being part of a final effector complex. This chain is DNA mismatch repair protein MutL, found in Lactobacillus johnsonii (strain CNCM I-12250 / La1 / NCC 533).